The following is a 331-amino-acid chain: Phosphoribosylformylglycinamidine cyclo-ligase (331 aa).

This sequence belongs to the AIR synthase family.

The protein localises to the cytoplasm. The catalysed reaction is 2-formamido-N(1)-(5-O-phospho-beta-D-ribosyl)acetamidine + ATP = 5-amino-1-(5-phospho-beta-D-ribosyl)imidazole + ADP + phosphate + H(+). It functions in the pathway purine metabolism; IMP biosynthesis via de novo pathway; 5-amino-1-(5-phospho-D-ribosyl)imidazole from N(2)-formyl-N(1)-(5-phospho-D-ribosyl)glycinamide: step 2/2. This Clostridium botulinum (strain Okra / Type B1) protein is Phosphoribosylformylglycinamidine cyclo-ligase.